The chain runs to 707 residues: MVDPVPEEEKAGAEPGDSGGDEAVASVPPDSQGAQEPAASSASASASAAVPRKAEVPCAAAEGGRREQSPLLHLDLFNFDCPEAEGSRYVLTSPRSLEACARCAVKPVELLPRALADLVREAPGRSMRVATGLYEAYEAERRAKLQQCRAERERIMREEKRRLFTPLSPAAAAAAAAAAASAPSAGSSSSCSSASLPASPAPRAARKASPSPSSARTQPPPAGSRTGRKSHSLDSLSRRREGALSSESGASSSSYSGESLRELRWPPRASARNSCPAGSASSTTNAPGRPSALTLVPITGRSFSLGDLSHSPQTAQHVERIVRQVRAERGLRGVPERDRKIAALMLARHQEELLLLEQRAAAHGQWELQRVHAKQRREREEREKQRALEQGRRAWAAQVEERRGRRGREEREAARRRQRQYERSEERRRELAERQGLLRRERAERAAREDRLRKLQQEQNLKQREEGLQEGRERAEQIRRERAQRAARAKQRQEGQLQREKRELSRAERARHEALLQGRTRQQRQEREGLRSSLEASLGRAQENYEHLVEQRTRELRERARREELQGRRAKEAAERKEREHQAHLEALARAGERRLQHATQVAEEAVQQKARRVGQSRLEKERAQRANKEKVERDEDCRRRELLQAIGRKLERSEQLTRERRSALESARSTARASFHVREKVREETNTRSFDRMVREAQLHASLDRK.

2 disordered regions span residues 1–65 (MVDP…EGGR) and 183–294 (PSAG…SALT). Low complexity-rich tracts occupy residues 38–49 (AASSASASASAA), 183–215 (PSAGSSSSCSSASLPASPAPRAARKASPSPSSA), and 243–258 (ALSSESGASSSSYSGE). Serine 311 bears the Phosphoserine mark. Residues 364 to 605 (GQWELQRVHA…LQHATQVAEE (242 aa)) are a coiled coil. Disordered regions lie at residues 372-426 (HAKQ…RSEE), 454-581 (KLQQ…EREH), 597-637 (QHAT…RDED), and 652-707 (ERSE…LDRK). 7 stretches are compositionally biased toward basic and acidic residues: residues 377 to 392 (REREEREKQRALEQGR), 399 to 426 (VEERRGRRGREEREAARRRQRQYERSEE), 454 to 484 (KLQQEQNLKQREEGLQEGRERAEQIRRERAQ), 491 to 514 (QRQEGQLQREKRELSRAERARHEA), 543 to 581 (ENYEHLVEQRTRELRERARREELQGRRAKEAAERKEREH), 618 to 637 (RLEKERAQRANKEKVERDED), and 652 to 664 (ERSEQLTRERRSA). Over residues 665 to 675 (LESARSTARAS) the composition is skewed to low complexity. Positions 677–707 (HVREKVREETNTRSFDRMVREAQLHASLDRK) are enriched in basic and acidic residues.

The chain is Coiled-coil domain-containing protein 177 (CCDC177) from Homo sapiens (Human).